Consider the following 146-residue polypeptide: Large ribosomal subunit protein uL24z (146 aa).

2 disordered regions span residues 1 to 26 (MKYNPRVTSSRRKNRKAHFTASSSER) and 121 to 146 (KAKGRAAADKEKGTKFTSEDVMQNVD). The segment covering 9–18 (SSRRKNRKAH) has biased composition (basic residues). The span at 121–138 (KAKGRAAADKEKGTKFTS) shows a compositional bias: basic and acidic residues.

This sequence belongs to the universal ribosomal protein uL24 family.

The chain is Large ribosomal subunit protein uL24z (RPL26A) from Arabidopsis thaliana (Mouse-ear cress).